The following is a 138-amino-acid chain: MNTKIGLSLSEKYYWSWKTKTSNCPCFSCSGEGNIVINKVSGEKYLQYNLTYLKDIWAPLKELNLEKQFDIIALVRGGGLTGQTESIQLGVARLLCQMNPQNRSVLKPFGFLTRDARIKERKKYGLRKARKAPQYSKR.

It belongs to the universal ribosomal protein uS9 family.

Its subcellular location is the plastid. The protein localises to the chloroplast. The chain is Small ribosomal subunit protein uS9c (rps9) from Trieres chinensis (Marine centric diatom).